Consider the following 446-residue polypeptide: 23S rRNA (uracil(1939)-C(5))-methyltransferase RlmD (446 aa).

Residues 6–64 (KKLPQESITCEIESLSHEGRGVSHKDGKTLFVEGALPGETVTARYVNSRRSYDELAVEE) form the TRAM domain. Residues C77, C83, C86, and C165 each coordinate [4Fe-4S] cluster. S-adenosyl-L-methionine-binding residues include Q275, F304, N309, E325, D352, and D377. Residue C403 is the Nucleophile of the active site.

The protein belongs to the class I-like SAM-binding methyltransferase superfamily. RNA M5U methyltransferase family. RlmD subfamily.

It catalyses the reaction uridine(1939) in 23S rRNA + S-adenosyl-L-methionine = 5-methyluridine(1939) in 23S rRNA + S-adenosyl-L-homocysteine + H(+). In terms of biological role, catalyzes the formation of 5-methyl-uridine at position 1939 (m5U1939) in 23S rRNA. In Hahella chejuensis (strain KCTC 2396), this protein is 23S rRNA (uracil(1939)-C(5))-methyltransferase RlmD.